The following is a 598-amino-acid chain: Serine/threonine-protein kinase cot-1 (598 aa).

Polar residues-rich tracts occupy residues 1 to 16 (MDNT…TNDT), 24 to 33 (TYPTTPSTFP), and 99 to 126 (PRTS…TQTE). Disordered regions lie at residues 1 to 46 (MDNT…GGSQ), 80 to 148 (GSAG…NQKK), and 163 to 190 (RARE…RESI). The Protein kinase domain maps to 214–518 (YQTIKIIGKG…AHEIKSHAFF (305 aa)). ATP-binding positions include 220 to 228 (IGKGAFGEV) and K243. D337 functions as the Proton acceptor in the catalytic mechanism. Positions 519–598 (RGVEFDSLRR…TFKRFDNNFR (80 aa)) constitute an AGC-kinase C-terminal domain.

The protein belongs to the protein kinase superfamily. STE Ser/Thr protein kinase family. COT1 subfamily.

It carries out the reaction L-seryl-[protein] + ATP = O-phospho-L-seryl-[protein] + ADP + H(+). The enzyme catalyses L-threonyl-[protein] + ATP = O-phospho-L-threonyl-[protein] + ADP + H(+). Its function is as follows. Protein kinase required for hyphal elongation. The polypeptide is Serine/threonine-protein kinase cot-1 (cot-1) (Neurospora crassa (strain ATCC 24698 / 74-OR23-1A / CBS 708.71 / DSM 1257 / FGSC 987)).